The chain runs to 242 residues: 3-deoxy-manno-octulosonate cytidylyltransferase (242 aa).

This sequence belongs to the KdsB family.

It is found in the cytoplasm. The enzyme catalyses 3-deoxy-alpha-D-manno-oct-2-ulosonate + CTP = CMP-3-deoxy-beta-D-manno-octulosonate + diphosphate. It functions in the pathway nucleotide-sugar biosynthesis; CMP-3-deoxy-D-manno-octulosonate biosynthesis; CMP-3-deoxy-D-manno-octulosonate from 3-deoxy-D-manno-octulosonate and CTP: step 1/1. The protein operates within bacterial outer membrane biogenesis; lipopolysaccharide biosynthesis. In terms of biological role, activates KDO (a required 8-carbon sugar) for incorporation into bacterial lipopolysaccharide in Gram-negative bacteria. This chain is 3-deoxy-manno-octulosonate cytidylyltransferase, found in Mesorhizobium japonicum (strain LMG 29417 / CECT 9101 / MAFF 303099) (Mesorhizobium loti (strain MAFF 303099)).